Reading from the N-terminus, the 269-residue chain is Aegyptin-like protein (269 aa).

The signal sequence occupies residues 1-19 (MKLLLLLASVLCLALIVSA). Residues 19-152 (ARPSDETTDQ…GGAEGGEESP (134 aa)) are disordered. A GE-rich region which mediates binding of Ca(2+) region spans residues 38 to 148 (TSDSYHQEED…AGEEGGAEGG (111 aa)). Composition is skewed to acidic residues over residues 56-73 (GTED…ESSS), 98-121 (GEED…EGGA), and 131-149 (GGAD…EGGE). The segment at 148-269 (GEESPVNTYH…DCIVEKRDSE (122 aa)) is mediates binding of host collagen and inhibition of platelet aggregation. 2 disulfide bridges follow: C208–C261 and C230–C239.

This sequence belongs to the aegyptin family. In terms of tissue distribution, female saliva (at protein level). Distal lateral lobes of female salivary gland (at protein level). Low-level expression in male salivary gland. Not detected in female and male carcasses.

The protein resides in the secreted. Modulates blood feeding of female mosquitoes on vertebrate hosts. Inhibits collagen-induced platelet aggregation in the host via preventing collagen interaction with its ligands: glycoprotein VI and integrin alpha-2/beta-1 (ITGA2/ITGB1). Inhibits collagen-induced increase of Ca(2+) levels in host platelets. Binds to host collagens. Binds Ca(2+). Prevents a decrease in platelet count in the host blood after collagen injection. Functionally, (Microbial infection) Does not affect the development of Plasmodium berghei parasites in mosquitoes. The chain is Aegyptin-like protein from Anopheles stephensi (Indo-Pakistan malaria mosquito).